Reading from the N-terminus, the 365-residue chain is DNA replication and repair protein RecF (365 aa).

ATP is bound at residue 30 to 37 (GDNGEGKT).

This sequence belongs to the RecF family.

It is found in the cytoplasm. Functionally, the RecF protein is involved in DNA metabolism; it is required for DNA replication and normal SOS inducibility. RecF binds preferentially to single-stranded, linear DNA. It also seems to bind ATP. The protein is DNA replication and repair protein RecF of Leptospira interrogans serogroup Icterohaemorrhagiae serovar copenhageni (strain Fiocruz L1-130).